Here is an 856-residue protein sequence, read N- to C-terminus: Leucine--tRNA ligase (856 aa).

Residues 53-63 carry the 'HIGH' region motif; sequence PYPSGNLHMGH. Residues 622 to 626 carry the 'KMSKS' region motif; that stretch reads KMSKS. Lys625 is an ATP binding site.

This sequence belongs to the class-I aminoacyl-tRNA synthetase family.

The protein localises to the cytoplasm. It carries out the reaction tRNA(Leu) + L-leucine + ATP = L-leucyl-tRNA(Leu) + AMP + diphosphate. The polypeptide is Leucine--tRNA ligase (Prochlorococcus marinus (strain AS9601)).